Consider the following 363-residue polypeptide: UDP-N-acetylglucosamine--N-acetylmuramyl-(pentapeptide) pyrophosphoryl-undecaprenol N-acetylglucosamine transferase (363 aa).

Residues 10-12, N124, R161, S195, and Q291 each bind UDP-N-acetyl-alpha-D-glucosamine; that span reads TAG.

Belongs to the glycosyltransferase 28 family. MurG subfamily.

It is found in the cell membrane. The catalysed reaction is di-trans,octa-cis-undecaprenyl diphospho-N-acetyl-alpha-D-muramoyl-L-alanyl-D-glutamyl-meso-2,6-diaminopimeloyl-D-alanyl-D-alanine + UDP-N-acetyl-alpha-D-glucosamine = di-trans,octa-cis-undecaprenyl diphospho-[N-acetyl-alpha-D-glucosaminyl-(1-&gt;4)]-N-acetyl-alpha-D-muramoyl-L-alanyl-D-glutamyl-meso-2,6-diaminopimeloyl-D-alanyl-D-alanine + UDP + H(+). It participates in cell wall biogenesis; peptidoglycan biosynthesis. In terms of biological role, cell wall formation. Catalyzes the transfer of a GlcNAc subunit on undecaprenyl-pyrophosphoryl-MurNAc-pentapeptide (lipid intermediate I) to form undecaprenyl-pyrophosphoryl-MurNAc-(pentapeptide)GlcNAc (lipid intermediate II). The protein is UDP-N-acetylglucosamine--N-acetylmuramyl-(pentapeptide) pyrophosphoryl-undecaprenol N-acetylglucosamine transferase of Streptomyces avermitilis (strain ATCC 31267 / DSM 46492 / JCM 5070 / NBRC 14893 / NCIMB 12804 / NRRL 8165 / MA-4680).